Here is a 408-residue protein sequence, read N- to C-terminus: Histidine--tRNA ligase (408 aa).

The protein belongs to the class-II aminoacyl-tRNA synthetase family.

The protein resides in the cytoplasm. The enzyme catalyses tRNA(His) + L-histidine + ATP = L-histidyl-tRNA(His) + AMP + diphosphate + H(+). In Methanospirillum hungatei JF-1 (strain ATCC 27890 / DSM 864 / NBRC 100397 / JF-1), this protein is Histidine--tRNA ligase.